The chain runs to 226 residues: E3 ubiquitin-protein ligase RNF186 (226 aa).

The segment at 39-85 (CLVCREPYNCARSPKLLSCQHTFCAVCLKLLLYVQEDTWSIPCPLCR) adopts an RING-type zinc-finger fold. 2 consecutive transmembrane segments (helical) span residues 157–177 (HLLL…PGVI) and 179–199 (WVLA…CCHP).

As to quaternary structure, interacts with BNIP1. Post-translationally, polyubiquitinated. 'Lys-29'-linked autoubiquitination leads to proteasomal degradation.

It localises to the endoplasmic reticulum membrane. It catalyses the reaction S-ubiquitinyl-[E2 ubiquitin-conjugating enzyme]-L-cysteine + [acceptor protein]-L-lysine = [E2 ubiquitin-conjugating enzyme]-L-cysteine + N(6)-ubiquitinyl-[acceptor protein]-L-lysine.. The protein operates within protein modification; protein ubiquitination. Its function is as follows. E3 ubiquitin protein ligase that is part of an apoptotic signaling pathway activated by endoplasmic reticulum stress. Stimulates the expression of proteins specific of the unfolded protein response (UPR), ubiquitinates BNIP1 and regulates its localization to the mitochondrion and induces calcium release from the endoplasmic reticulum that ultimately leads to cell apoptosis. Plays a role in the maintenance of intestinal homeostasis and clearance of enteric pathogens. Upon NOD2 stimulation, ubiquitinates the ER stress sensor activating transcription factor 6/ATF6 and promotes the unfolded protein response UPR. Participates in basal level of autophagy maintenance by regulating the ubiquitination of EPHB2. Upon stimulation by ligand EFNB1, ubiquitinates EPHB2 and further recruits MAP1LC3B for autophagy induction. Controls nutrient sensing by ubiquitinating Sestrin-2/SESN2, which is an intracellular sensor of cytosolic leucine and inhibitor of mTORC1 activity. This chain is E3 ubiquitin-protein ligase RNF186, found in Mus musculus (Mouse).